We begin with the raw amino-acid sequence, 181 residues long: MIVVTGMPGAGKDEFVKVARSLGFIDLHMGNTVREFAKNAGIPEIDHEIGNFATSERKKYGMDIWAVRTAQKITDDGRTVIDGLRNYEELQYFSKFSENPYVVAIFASRKDRFSRILKRDRPDDIRTMEELIERDTRELSWGIGNVIALADYMIVNDDTLETFHARCRKLLTEKFSISNKI.

ATP is bound at residue Gly6 to Asp13.

The protein belongs to the UPF0200 family.

This is UPF0200 protein Ta0179 from Thermoplasma acidophilum (strain ATCC 25905 / DSM 1728 / JCM 9062 / NBRC 15155 / AMRC-C165).